The primary structure comprises 595 residues: Beta-(1--&gt;2)glucan export ATP-binding/permease protein NdvA (595 aa).

5 helical membrane-spanning segments follow: residues 21-41 (FLLI…EPIL), 56-76 (LVTL…YVLV), 129-149 (IWLE…VLVP), 158-178 (LSIV…LVMQ), and 252-272 (ISIV…QLSV). Residues 21–301 (FLLICTANIT…ISGFINLAVS (281 aa)) enclose the ABC transmembrane type-1 domain. In terms of domain architecture, ABC transporter spans 335-569 (IQFHHVTYEF…DGHFYKLLKR (235 aa)). ATP is bound at residue 368-375 (GPTGAGKT).

The protein belongs to the ABC transporter superfamily. Beta-(1--&gt;2)glucan exporter (TC 3.A.1.108.1) family. In terms of assembly, homodimer.

The protein resides in the cell inner membrane. The enzyme catalyses [(1-&gt;2)-beta-D-glucosyl](n)(in) + ATP + H2O = [(1-&gt;2)-beta-D-glucosyl](n)(out) + ADP + phosphate + H(+). In terms of biological role, involved in beta-(1--&gt;2)glucan export. Transmembrane domains (TMD) form a pore in the inner membrane and the ATP-binding domain (NBD) is responsible for energy generation. This Bartonella bacilliformis protein is Beta-(1--&gt;2)glucan export ATP-binding/permease protein NdvA.